The following is a 485-amino-acid chain: Aldehyde dehydrogenase family 3 member A2 (485 aa).

At 1–463 (MELEVRRVRQ…FLLKRFNKEK (463 aa)) the chain is on the cytoplasmic side. 185-190 (GNTAVG) serves as a coordination point for NAD(+). Residues Glu-207 and Cys-241 contribute to the active site. Ser-293 is subject to Phosphoserine. Residues 464-484 (LGLLLLTFLGIVAAVLVKAEY) form a helical membrane-spanning segment. Positions 481–484 (KAEY) match the Prevents secretion from ER motif.

It belongs to the aldehyde dehydrogenase family. In terms of assembly, homodimer.

The protein localises to the microsome membrane. The protein resides in the endoplasmic reticulum membrane. It catalyses the reaction an aldehyde + NAD(+) + H2O = a carboxylate + NADH + 2 H(+). The catalysed reaction is a fatty aldehyde + NAD(+) + H2O = a fatty acid + NADH + 2 H(+). The enzyme catalyses (2E)-hexadecenal + NAD(+) + H2O = (E)-hexadec-2-enoate + NADH + 2 H(+). It carries out the reaction hexadecanoate + NADH + 2 H(+) = hexadecanal + NAD(+) + H2O. It catalyses the reaction 22-oxodocosanoate + NAD(+) + H2O = docosanedioate + NADH + 2 H(+). The catalysed reaction is 2,6,10,14-tetramethylpentadecanal + NAD(+) + H2O = 2,6,10,14-tetramethylpentadecanoate + NADH + 2 H(+). The enzyme catalyses octadecanal + NAD(+) + H2O = octadecanoate + NADH + 2 H(+). It carries out the reaction dodecanoate + NADH + 2 H(+) = dodecanal + NAD(+) + H2O. It catalyses the reaction decanal + NAD(+) + H2O = decanoate + NADH + 2 H(+). The catalysed reaction is tetradecanal + NAD(+) + H2O = tetradecanoate + NADH + 2 H(+). The enzyme catalyses octanal + NAD(+) + H2O = octanoate + NADH + 2 H(+). It carries out the reaction heptanal + NAD(+) + H2O = heptanoate + NADH + 2 H(+). It catalyses the reaction (2E,6E)-farnesal + NAD(+) + H2O = (2E,6E)-farnesoate + NADH + 2 H(+). Functionally, catalyzes the oxidation of medium and long-chain aliphatic aldehydes to fatty acids. Active on a variety of saturated and unsaturated aliphatic aldehydes between 6 and 24 carbons in length. Responsible for conversion of the sphingosine 1-phosphate (S1P) degradation product hexadecenal to hexadecenoic acid. This is Aldehyde dehydrogenase family 3 member A2 (ALDH3A2) from Pongo abelii (Sumatran orangutan).